The primary structure comprises 140 residues: Cysteine desulfuration protein SufE (140 aa).

C51 functions as the Cysteine persulfide intermediate in the catalytic mechanism.

Belongs to the SufE family. Homodimer. Interacts with SufS.

The protein localises to the cytoplasm. It functions in the pathway cofactor biosynthesis; iron-sulfur cluster biosynthesis. Its function is as follows. Participates in cysteine desulfuration mediated by SufS. Cysteine desulfuration mobilizes sulfur from L-cysteine to yield L-alanine and constitutes an essential step in sulfur metabolism for biosynthesis of a variety of sulfur-containing biomolecules. Functions as a sulfur acceptor for SufS, by mediating the direct transfer of the sulfur atom from the S-sulfanylcysteine of SufS, an intermediate product of cysteine desulfuration process. The protein is Cysteine desulfuration protein SufE of Yersinia enterocolitica serotype O:8 / biotype 1B (strain NCTC 13174 / 8081).